Here is a 756-residue protein sequence, read N- to C-terminus: Receptor-like protein 3 (756 aa).

Residues 1 to 50 (MTNEGRFKAKGFVRTSSTTRPIQALSFHMIGILLQCVLFISVLSIAVSEA) form the signal peptide. Residues 51 to 88 (LCNSQDRESLLWFSGNVSSSVSPLNWNPSIDCCSWEGI) are N-cap. The Extracellular segment spans residues 51 to 725 (LCNSQDRESL…ADTEDEEELK (675 aa)). An N-linked (GlcNAc...) asparagine glycan is attached at asparagine 66. LRR repeat units lie at residues 95 to 119 (DSHI…VLRL), 120 to 143 (HHLS…FLSA), 145 to 169 (DQLK…TFRN), 174 to 199 (CFPI…IFMQ), 201 to 225 (TFDL…MCKS), 226 to 250 (SPQL…LGRC), 252 to 274 (KLSV…IYNL), 275 to 298 (SELE…ITHL), 299 to 322 (TKLK…IGQL), 323 to 346 (SRLQ…LANC), 348 to 370 (NLVK…DFSR), 371 to 395 (FQSL…VHSC), 397 to 419 (SLSA…VLEL), 420 to 443 (ESLS…GILQ), 445 to 471 (CRNL…LISS), 474 to 498 (FPNL…LIKL), 499 to 521 (KSLA…WLGT), and 522 to 546 (FPHL…LFQL). N-linked (GlcNAc...) asparagine glycosylation is found at asparagine 126 and asparagine 169. Asparagine 208 carries an N-linked (GlcNAc...) asparagine glycan. N-linked (GlcNAc...) asparagine glycosylation is found at asparagine 262 and asparagine 273. Residues asparagine 334 and asparagine 345 are each glycosylated (N-linked (GlcNAc...) asparagine). A glycan (N-linked (GlcNAc...) asparagine) is linked at asparagine 381. 3 N-linked (GlcNAc...) asparagine glycosylation sites follow: asparagine 434, asparagine 447, and asparagine 459. Residues 548-569 (ALMSQKAYDATERNYLKLPVFV) form an LRR 19; degenerate repeat. LRR repeat units lie at residues 570 to 593 (SPNN…IYIR), 608 to 631 (LKVL…ELSK), 632 to 656 (LTSL…LTSL), and 658 to 681 (YMSY…QFDT). Asparagine 573 is a glycosylation site (N-linked (GlcNAc...) asparagine). N-linked (GlcNAc...) asparagine glycosylation is present at asparagine 666. Positions 699–725 (LTSCKASTKLPATTTNKADTEDEEELK) are C-cap/acidic domain. A helical membrane pass occupies residues 726–746 (FIFILGVATGFFVSYCFYWCF). At 747 to 756 (FARLDAFISK) the chain is on the cytoplasmic side.

This sequence belongs to the RLP family. In terms of tissue distribution, expressed at very low levels in the shoot apex.

The protein localises to the cell membrane. In terms of biological role, involved in the perception of CLV3 and CLV3-like peptides, that act as extracellular signals regulating meristems maintenance. Contributes, with WAKL22/RFO1, to resistance to F.oxysporum (f.) matthioli in cv. Columbia relative to cv. Ty-0. The protein is Receptor-like protein 3 of Arabidopsis thaliana (Mouse-ear cress).